A 126-amino-acid polypeptide reads, in one-letter code: UPF0102 protein P9303_16141 (126 aa).

The protein belongs to the UPF0102 family.

The sequence is that of UPF0102 protein P9303_16141 from Prochlorococcus marinus (strain MIT 9303).